The chain runs to 209 residues: Tektin bundle-interacting protein 1 (209 aa).

As to quaternary structure, microtubule inner protein component of sperm flagellar doublet microtubules.

The protein localises to the cytoplasm. The protein resides in the cytoskeleton. It localises to the cilium axoneme. Its subcellular location is the flagellum axoneme. Functionally, microtubule inner protein (MIP) part of the dynein-decorated doublet microtubules (DMTs) in cilia axoneme, which is required for motile cilia beating. Located at the center of the tektin bundle where may function to recruit tektins or stabilize the bundle. The protein is Tektin bundle-interacting protein 1 (TEKTIP1) of Macaca fascicularis (Crab-eating macaque).